The sequence spans 573 residues: Acyl-coenzyme A synthetase ACSM1, mitochondrial (573 aa).

The N-terminal 35 residues, 1 to 35 (MQWLKSFQICKVLQGFSLSPTQLHRRLFSRVGAPR), are a transit peptide targeting the mitochondrion. Lysine 81 carries the post-translational modification N6-succinyllysine. The residue at position 142 (lysine 142) is an N6-acetyllysine; alternate. N6-succinyllysine; alternate is present on lysine 142. At lysine 179 the chain carries N6-succinyllysine. Lysine 200 is subject to N6-acetyllysine; alternate. Lysine 200 carries the post-translational modification N6-succinyllysine; alternate. Lysine 210 carries the N6-acetyllysine modification. Position 222–230 (222–230 (TSGTTGYPK)) interacts with ATP. Lysine 233 and lysine 324 each carry N6-succinyllysine. Residues lysine 352 and lysine 387 each carry the N6-acetyllysine; alternate modification. Residues lysine 352 and lysine 387 each carry the N6-succinyllysine; alternate modification. ATP-binding residues include aspartate 448 and arginine 463. At lysine 501 the chain carries N6-succinyllysine. N6-acetyllysine is present on lysine 527. Lysine 534 bears the N6-acetyllysine; alternate mark. N6-succinyllysine; alternate is present on lysine 534. Lysine 545 is modified (N6-acetyllysine). Position 559 (lysine 559) interacts with ATP.

The protein belongs to the ATP-dependent AMP-binding enzyme family. Monomer. Mg(2+) serves as cofactor. It depends on Mn(2+) as a cofactor. Highly expressed in liver and kidney.

Its subcellular location is the mitochondrion matrix. The protein resides in the mitochondrion. It carries out the reaction a medium-chain fatty acid + ATP + CoA = a medium-chain fatty acyl-CoA + AMP + diphosphate. The catalysed reaction is benzoate + ATP + CoA = benzoyl-CoA + AMP + diphosphate. It catalyses the reaction (R)-lipoate + GTP + H(+) = (R)-lipoyl-GMP + diphosphate. The enzyme catalyses octanoate + ATP + CoA = octanoyl-CoA + AMP + diphosphate. It carries out the reaction decanoate + ATP + CoA = decanoyl-CoA + AMP + diphosphate. The catalysed reaction is dodecanoate + ATP + CoA = dodecanoyl-CoA + AMP + diphosphate. It catalyses the reaction tetradecanoate + ATP + CoA = tetradecanoyl-CoA + AMP + diphosphate. The enzyme catalyses hexanoate + ATP + CoA = hexanoyl-CoA + AMP + diphosphate. It carries out the reaction butanoate + ATP + CoA = butanoyl-CoA + AMP + diphosphate. The catalysed reaction is hexadecanoate + ATP + CoA = hexadecanoyl-CoA + AMP + diphosphate. In terms of biological role, catalyzes the activation of fatty acids by CoA to produce an acyl-CoA, the first step in fatty acid metabolism. Capable of activating medium-chain fatty acids (e.g. butyric (C4) to decanoic (C10) acids), and certain carboxylate-containing xenobiotics, e.g. benzoate. Also catalyzes the activation of lipoate to lipoyl-nucleoside monophosphate. Activates lipoate with GTP at a 1000-fold higher rate than with ATP and activates both (R)- and (S)-lipoate to the respective lipoyl-GMP, with a preference for (R)-lipoate. The protein is Acyl-coenzyme A synthetase ACSM1, mitochondrial (Acsm1) of Mus musculus (Mouse).